A 367-amino-acid chain; its full sequence is MHINVRGTRKIISNVSSFTPRYEFPKYSMPLTDFKGHQVKALKTFEKLLPQMNMIIELRDIRAPLSTRNVVFDRIARKEHDVMKLVVYTRKDLMPGNKPYIGKLKNWHEELGEKFILLDCRNKTDVRNLLKILEWQNYELETNGGYLPMGYRALITGMPNVGKSTLINSLRTIFHNQVNMGRKFKKVAKTGAEAGVTRATSEVIRVTSRNTESRNEIYLIDTPGIGVPGRVSDHNRMLGLALCGSVKNNLVDPIFQADYLLYLMNLQNLNDGRTELYPGSTNSPTNDIYDVLRRLQVNKSQNEKSTAIEWTNKWRLHGKGIIFDPEVLLNNDEFSYKNYVNDQLEKLGDLSYEGLSNKLKGNPNQVF.

The 187-residue stretch at 42 to 228 (LKTFEKLLPQ…LIDTPGIGVP (187 aa)) folds into the CP-type G domain. GTP contacts are provided by residues 89–92 (TRKD), 160–165 (NVGKST), and glycine 224.

Belongs to the TRAFAC class YlqF/YawG GTPase family. MTG1 subfamily.

It is found in the mitochondrion inner membrane. Functionally, mitochondrial GTPase involved in assembly of the large ribosomal subunit. Plays a role in expression of the mitochondrial translational machinery. The protein is Mitochondrial GTPase 1 (MTG1) of Saccharomyces cerevisiae (strain ATCC 204508 / S288c) (Baker's yeast).